Consider the following 274-residue polypeptide: Penicillin-insensitive murein endopeptidase (274 aa).

The signal sequence occupies residues 1-19 (MNKTAIALLALLASSASLA). Disulfide bonds link cysteine 44/cysteine 265, cysteine 187/cysteine 235, and cysteine 216/cysteine 223. The Zn(2+) site is built by histidine 110, histidine 113, aspartate 120, aspartate 147, histidine 150, and histidine 211. Residues 227 to 274 (PLPPPGDGCGAELQSWFEPPKPGTTKPEKKTPPPLPPSCQALLDEHVI) are disordered.

This sequence belongs to the peptidase M74 family. Dimer. Zn(2+) is required as a cofactor.

It localises to the periplasm. Murein endopeptidase that cleaves the D-alanyl-meso-2,6-diamino-pimelyl amide bond that connects peptidoglycan strands. Likely plays a role in the removal of murein from the sacculus. The sequence is that of Penicillin-insensitive murein endopeptidase from Escherichia coli O9:H4 (strain HS).